A 137-amino-acid polypeptide reads, in one-letter code: MNALRGWLAALGSMLLASAAQLGMRWGMSRLPLPEAWAGQTPERAALLAVALAVAAYAASLLCWLAALRHLPLGRAYSLLSASYALVYLLAASLPAFDETFSTSKILGVGLVVLGVLTVNARRTAAAPAHHPSRKAP.

Over 1 to 3 (MNA) the chain is Cytoplasmic. A helical membrane pass occupies residues 4–24 (LRGWLAALGSMLLASAAQLGM). Over 25–44 (RWGMSRLPLPEAWAGQTPER) the chain is Periplasmic. The helical transmembrane segment at 45–65 (AALLAVALAVAAYAASLLCWL) threads the bilayer. The Cytoplasmic portion of the chain corresponds to 66 to 76 (AALRHLPLGRA). A helical membrane pass occupies residues 77-97 (YSLLSASYALVYLLAASLPAF). Residues 98 to 100 (DET) are Periplasmic-facing. Residues 101–121 (FSTSKILGVGLVVLGVLTVNA) traverse the membrane as a helical segment. At 122–137 (RRTAAAPAHHPSRKAP) the chain is on the cytoplasmic side.

It belongs to the ArnF family. As to quaternary structure, heterodimer of ArnE and ArnF.

It localises to the cell inner membrane. The protein operates within bacterial outer membrane biogenesis; lipopolysaccharide biosynthesis. In terms of biological role, translocates 4-amino-4-deoxy-L-arabinose-phosphoundecaprenol (alpha-L-Ara4N-phosphoundecaprenol) from the cytoplasmic to the periplasmic side of the inner membrane. The chain is Probable 4-amino-4-deoxy-L-arabinose-phosphoundecaprenol flippase subunit ArnF from Pseudomonas aeruginosa (strain LESB58).